Consider the following 919-residue polypeptide: Calcium-transporting ATPase type 2C member 1 (919 aa).

Residues 1 to 70 (MKVARFQKIP…NEFDISEDEP (70 aa)) are Cytoplasmic-facing. The helical transmembrane segment at 71 to 91 (LWKKYISQFKNPLIMLLLASA) threads the bilayer. Residues 92–104 (VISVLMHQFDDAV) are Lumenal-facing. The chain crosses the membrane as a helical span at residues 105–123 (SITVAILIVVTVAFVQEYR). Topologically, residues 124–262 (SEKSLEELSK…APKTPLQKSM (139 aa)) are cytoplasmic. A helical transmembrane segment spans residues 263–282 (DLLGKQLSFYSFGIIGIIML). The Lumenal segment spans residues 283–294 (VGWLLGKDILEM). Residues 295 to 312 (FTISVSLAVAAIPEGLPI) traverse the membrane as a helical segment. Ca(2+) is bound by residues Val303, Ala304, Ile306, and Glu308. The Cytoplasmic segment spans residues 313–699 (VVTVTLALGV…EEGKGIYNNI (387 aa)). Asp350 serves as the catalytic 4-aspartylphosphate intermediate. Residues Asp644 and Asp648 each contribute to the Mg(2+) site. The helical transmembrane segment at 700–719 (KNFVRFQLSTSIAALTLISL) threads the bilayer. Residues 720–729 (ATLMNFPNPL) lie on the Lumenal side of the membrane. Residues 730-750 (NAMQILWINIIMDGPPAQSLG) form a helical membrane-spanning segment. Residues Asn738 and Asp742 each coordinate Ca(2+). Residues 751–770 (VEPVDKDVIRKPPRNWKDSI) are Cytoplasmic-facing. The helical transmembrane segment at 771–793 (LTKNLILKILVSSIIIVCGTLFV) threads the bilayer. Residues 794-808 (FWRELRDNVITPRDT) lie on the Lumenal side of the membrane. A helical transmembrane segment spans residues 809–828 (TMTFTCFVFFDMFNALSSRS). Residues 829–841 (QTKSVFEIGLCSN) are Cytoplasmic-facing. Residues 842–860 (RMFCYAVLGSIMGQLLVIY) form a helical membrane-spanning segment. At 861–875 (FPPLQKVFQTESLSI) the chain is on the lumenal side. Residues 876–896 (LDLLFLLGLTSSVCIVAEIIK) form a helical membrane-spanning segment. Residues 897–919 (KVERSREKIQKHVSSTSSSFLEV) lie on the Cytoplasmic side of the membrane.

Belongs to the cation transport ATPase (P-type) (TC 3.A.3) family. Type IIA subfamily. As to quaternary structure, monomer. Homodimer. As to expression, found in most tissues except colon, thymus, spleen and leukocytes. Expressed in keratinocytes (at protein level).

The protein resides in the golgi apparatus. Its subcellular location is the trans-Golgi network membrane. It localises to the golgi stack membrane. The catalysed reaction is Ca(2+)(in) + ATP + H2O = Ca(2+)(out) + ADP + phosphate + H(+). The enzyme catalyses Mn(2+)(in) + ATP + H2O = Mn(2+)(out) + ADP + phosphate + H(+). In terms of biological role, ATP-driven pump that supplies the Golgi apparatus with Ca(2+) and Mn(2+) ions, both essential cofactors for processing and trafficking of newly synthesized proteins in the secretory pathway. Within a catalytic cycle, acquires Ca(2+) or Mn(2+) ions on the cytoplasmic side of the membrane and delivers them to the lumenal side. The transfer of ions across the membrane is coupled to ATP hydrolysis and is associated with a transient phosphorylation that shifts the pump conformation from inward-facing to outward-facing state. Plays a primary role in the maintenance of Ca(2+) homeostasis in the trans-Golgi compartment with a functional impact on Golgi and post-Golgi protein sorting as well as a structural impact on cisternae morphology. Responsible for loading the Golgi stores with Ca(2+) ions in keratinocytes, contributing to keratinocyte differentiation and epidermis integrity. Participates in Ca(2+) and Mn(2+) ions uptake into the Golgi store of hippocampal neurons and regulates protein trafficking required for neural polarity. May also play a role in the maintenance of Ca(2+) and Mn(2+) homeostasis and signaling in the cytosol while preventing cytotoxicity. This chain is Calcium-transporting ATPase type 2C member 1, found in Homo sapiens (Human).